The sequence spans 246 residues: Ribosomal RNA small subunit methyltransferase J (246 aa).

Residues 115–116 (ER) and D169 each bind S-adenosyl-L-methionine.

Belongs to the methyltransferase superfamily. RsmJ family.

It localises to the cytoplasm. The catalysed reaction is guanosine(1516) in 16S rRNA + S-adenosyl-L-methionine = N(2)-methylguanosine(1516) in 16S rRNA + S-adenosyl-L-homocysteine + H(+). Specifically methylates the guanosine in position 1516 of 16S rRNA. The sequence is that of Ribosomal RNA small subunit methyltransferase J from Buchnera aphidicola subsp. Acyrthosiphon pisum (strain Tuc7).